Consider the following 87-residue polypeptide: MVNMKASMFLTFAGLVLLFVVCYASESEEKEFPKGMLSSIFAVDNDFKQEERDCAGYMRECKEELCCSGYVCSSRWKWCVLPAPWRR.

The first 24 residues, 1-24, serve as a signal peptide directing secretion; it reads MVNMKASMFLTFAGLVLLFVVCYA. A propeptide spanning residues 25–52 is cleaved from the precursor; the sequence is SESEEKEFPKGMLSSIFAVDNDFKQEER. Cystine bridges form between cysteine 54–cysteine 67, cysteine 61–cysteine 72, and cysteine 66–cysteine 79.

This sequence belongs to the neurotoxin 10 (Hwtx-1) family. 51 (Hntx-8) subfamily. Hntx-8 sub-subfamily. As to expression, expressed by the venom gland.

It localises to the secreted. Functionally, ion channel inhibitor. This chain is U3-theraphotoxin-Hhn1e, found in Cyriopagopus hainanus (Chinese bird spider).